Reading from the N-terminus, the 160-residue chain is Protein-export protein SecB (160 aa).

It belongs to the SecB family. As to quaternary structure, homotetramer, a dimer of dimers. One homotetramer interacts with 1 SecA dimer.

The protein localises to the cytoplasm. In terms of biological role, one of the proteins required for the normal export of preproteins out of the cell cytoplasm. It is a molecular chaperone that binds to a subset of precursor proteins, maintaining them in a translocation-competent state. It also specifically binds to its receptor SecA. This chain is Protein-export protein SecB, found in Agrobacterium fabrum (strain C58 / ATCC 33970) (Agrobacterium tumefaciens (strain C58)).